Consider the following 53-residue polypeptide: uncharacterized protein (53 aa).

Its subcellular location is the mitochondrion matrix. It localises to the kinetoplast. This is an uncharacterized protein from Trypanosoma brucei brucei.